The following is a 121-amino-acid chain: Fluoride-specific ion channel FluC (121 aa).

Helical transmembrane passes span 5-25 (LLIFLGGGTGSVLRYLLTISI), 33-53 (FPWGTFAVNILGCILIGVFYT), 66-83 (LMLTIGLCGGFTTFSTFS), and 98-118 (FFTYIIGSVVLGILGVMLGIW). The Na(+) site is built by Gly74 and Thr77.

Belongs to the fluoride channel Fluc/FEX (TC 1.A.43) family.

Its subcellular location is the cell inner membrane. The enzyme catalyses fluoride(in) = fluoride(out). Na(+) is not transported, but it plays an essential structural role and its presence is essential for fluoride channel function. In terms of biological role, fluoride-specific ion channel. Important for reducing fluoride concentration in the cell, thus reducing its toxicity. The polypeptide is Fluoride-specific ion channel FluC (Phocaeicola vulgatus (strain ATCC 8482 / DSM 1447 / JCM 5826 / CCUG 4940 / NBRC 14291 / NCTC 11154) (Bacteroides vulgatus)).